The following is a 341-amino-acid chain: MAFPQRKRTPSFSSSVLDSVYRSIDESDGLQSDLKGSINENVSSSSSSPSPNKKDDKLTTLRRAIMDEEHWLYARSSTTTTNSSDSSSFSSSEAESYRTKRRLRKLAEQGKRSGDERQRTKRTVMDNDSRLFSKSDDDKKPKAVKIIEELKRSKQPVSPGARLTSFLNSIFQSNAKKVKLCSVGKTTDVKSSSSKSCFSRTRNKTDNNNNNCKKLERSIRFYPVRVTIDGDCRDYAQKHITRVRKPIPEFTAKKSVKEEIKTNDHHTEFTCITRNIGLKDFVRSNKYEGKEEEEDAWSHSSSDLFELDSYRIGMGRYLKELPVYETTDFKTNQAIARSLLL.

2 disordered regions span residues 28-61 and 76-138; these read DGLQ…LTTL and SSTT…SDDD. Over residues 52–61 the composition is skewed to basic and acidic residues; the sequence is NKKDDKLTTL. The span at 76 to 92 shows a compositional bias: low complexity; that stretch reads SSTTTTNSSDSSSFSSS. Basic and acidic residues predominate over residues 105-138; sequence KLAEQGKRSGDERQRTKRTVMDNDSRLFSKSDDD.

Belongs to the BIG GRAIN 1 (BG1) plant protein family.

The protein resides in the cell membrane. In terms of biological role, involved in auxin transport. Regulator of the auxin signaling pathway. The chain is Protein BIG GRAIN 1-like C from Arabidopsis thaliana (Mouse-ear cress).